The chain runs to 207 residues: Large ribosomal subunit protein uL4 (207 aa).

The tract at residues 49-78 is disordered; sequence HAVKNRSAVSGGGRKPWRQKGTGRARQGSI.

This sequence belongs to the universal ribosomal protein uL4 family. Part of the 50S ribosomal subunit.

Its function is as follows. One of the primary rRNA binding proteins, this protein initially binds near the 5'-end of the 23S rRNA. It is important during the early stages of 50S assembly. It makes multiple contacts with different domains of the 23S rRNA in the assembled 50S subunit and ribosome. In terms of biological role, forms part of the polypeptide exit tunnel. This is Large ribosomal subunit protein uL4 from Streptococcus pneumoniae serotype 2 (strain D39 / NCTC 7466).